The primary structure comprises 604 residues: Kelch-like protein 15 (604 aa).

The BTB domain maps to 31–98 (LDVTLVIEDH…MYYGTIELSM (68 aa)). Positions 133 to 237 (CAEIMRLLDD…TPTSVFEKVK (105 aa)) constitute a BACK domain. Kelch repeat units lie at residues 328-379 (FVFL…VIGK), 381-426 (IYAV…VLNN), 428-473 (LFIT…NKSK), 489-542 (KLYV…VLDK), and 544-590 (IMVL…VCNL).

Homodimer. Dimerization does not affect PPP2R5B-binding, but is required for its proteasomal degradation. Interacts with CUL3. Directly interacts with PPP2R5B; this interaction leads to PPP2R5B proteasomal degradation. Interacts with RBBP8/CtIP; this interaction leads to RBBP8 proteasomal degradation. Interacts with PACMP micropeptide; interaction prevents ubiquitination and degradation of RBBP8/CtIP.

It is found in the nucleus. It participates in protein modification; protein ubiquitination. Substrate-specific adapter for CUL3 E3 ubiquitin-protein ligase complex. Acts as an adapter for CUL3 to target the serine/threonine-protein phosphatase 2A (PP2A) subunit PPP2R5B for ubiquitination and subsequent proteasomal degradation, thus promoting exchange with other regulatory subunits. Acts as an adapter for CUL3 to target the DNA-end resection factor RBBP8/CtIP for ubiquitination and subsequent proteasomal degradation. Through the regulation of RBBP8/CtIP protein turnover, plays a key role in DNA damage response, favoring DNA double-strand repair through error-prone non-homologous end joining (NHEJ) over error-free, RBBP8-mediated homologous recombination (HR). The polypeptide is Kelch-like protein 15 (KLHL15) (Homo sapiens (Human)).